Reading from the N-terminus, the 407-residue chain is Arginine deiminase (407 aa).

Cys-397 functions as the Amidino-cysteine intermediate in the catalytic mechanism.

The protein belongs to the arginine deiminase family.

It localises to the cytoplasm. It catalyses the reaction L-arginine + H2O = L-citrulline + NH4(+). It participates in amino-acid degradation; L-arginine degradation via ADI pathway; carbamoyl phosphate from L-arginine: step 1/2. The polypeptide is Arginine deiminase (Limosilactobacillus fermentum (strain NBRC 3956 / LMG 18251) (Lactobacillus fermentum)).